The following is a 1017-amino-acid chain: Protein HIR2 (1017 aa).

WD repeat units lie at residues 10–49 (YHNGGIHSIDVNQDNTILVSGGTDNKIGVWNLKKLIELSK), 74–117 (CHKS…QLFP), 124–163 (SEVNPVVDLTISADNRLIAWSTNNGKVYLYDVVKDTFQEL), 167–208 (CHEK…DDTS), 228–271 (PLNV…TNIE), 275–326 (GHDF…PITV), and 330–371 (AVQG…YTFS). The tract at residues 417 to 561 (ISTTTSSSNT…APSDLPRSNS (145 aa)) is disordered. The span at 473 to 483 (LDDDIDGDGDD) shows a compositional bias: acidic residues. Polar residues-rich tracts occupy residues 518-535 (SDSTTQSLSFNKQKVTTK) and 545-561 (LISSGNSAPSDLPRSNS).

The protein belongs to the WD repeat HIR1 family.

The protein resides in the nucleus. Functionally, required for replication-independent chromatin assembly and for the periodic repression of histone gene transcription during the cell cycle. In Candida albicans (strain SC5314 / ATCC MYA-2876) (Yeast), this protein is Protein HIR2 (HIR2).